The primary structure comprises 550 residues: Parathyroid hormone 2 receptor (550 aa).

The N-terminal stretch at 1-24 (MAGLGASLHVWGWLMLGSCLLARA) is a signal peptide. The Extracellular portion of the chain corresponds to 27-145 (DSDGTITIEE…GKQEFFERLY (119 aa)). Residues Asn-51, Asn-106, Asn-116, and Asn-121 are each glycosylated (N-linked (GlcNAc...) asparagine). Residues 146 to 169 (VMYTVGYSISFGSLAVAILIIGYF) form a helical membrane-spanning segment. Residues 170-176 (RRLHCTR) are Cytoplasmic-facing. A helical membrane pass occupies residues 177 to 196 (NYIHMHLFVSFMLRATSIFV). At 197–237 (KDRVVHAHIGVKELESLIMQDDPQNSIEATSVDKSQYIGCK) the chain is on the extracellular side. A helical transmembrane segment spans residues 238–260 (IAVVMFIYFLATNYYWILVEGLY). Residues 261–275 (LHNLIFVAFFSDTKY) are Cytoplasmic-facing. The helical transmembrane segment at 276–297 (LWGFILIGWGFPAAFVAAWAVA) threads the bilayer. Residues 298–316 (RATLADARCWELSAGDIKW) are Extracellular-facing. Residues 317–337 (IYQAPILAAIGLNFILFLNTV) traverse the membrane as a helical segment. The Cytoplasmic segment spans residues 338–364 (RVLATKIWETNAVGHDTRKQYRKLAKS). Residues 365–383 (TLVLVLVFGVHYIVFVCLP) traverse the membrane as a helical segment. At 384-394 (HSFTGLGWEIR) the chain is on the extracellular side. The chain crosses the membrane as a helical span at residues 395–417 (MHCELFFNSFQGFFVSIIYCYCN). Residues 418–550 (GEVQAEVKKM…GCQGETEDVL (133 aa)) are Cytoplasmic-facing. A compositionally biased stretch (basic and acidic residues) spans 511–531 (EETKEDSGRQGDDILMEKPSR). A disordered region spans residues 511 to 550 (EETKEDSGRQGDDILMEKPSRPMESNPDTEGCQGETEDVL).

Belongs to the G-protein coupled receptor 2 family. As to quaternary structure, binds to TIPF39/TIP39. As to expression, expressed abundantly in brain and pancreas. Also expressed in the testis.

It localises to the cell membrane. In terms of biological role, this is a specific receptor for parathyroid hormone. The activity of this receptor is mediated by G proteins which activate adenylyl cyclase. PTH2R may be responsible for PTH effects in a number of physiological systems. It may play a significant role in pancreatic function. PTH2R presence in neurons indicates that it may function as a neurotransmitter receptor. In Homo sapiens (Human), this protein is Parathyroid hormone 2 receptor (PTH2R).